A 719-amino-acid chain; its full sequence is Eukaryotic translation initiation factor 3 subunit B (719 aa).

Residues 60 to 147 enclose the RRM domain; it reads NILVVDNLPV…HIFAVNMFDD (88 aa). 3 WD repeats span residues 167–207, 511–553, and 555–598; these read VPGE…KPEL, LKGK…TMAS, and EHFM…LYRI. Basic and acidic residues predominate over residues 675 to 686; that stretch reads EKMERQKLRDGE. A disordered region spans residues 675–698; the sequence is EKMERQKLRDGEASDEEEEYEAKE. Over residues 687-698 the composition is skewed to acidic residues; the sequence is ASDEEEEYEAKE.

Belongs to the eIF-3 subunit B family. In terms of assembly, component of the eukaryotic translation initiation factor 3 (eIF-3) complex.

It localises to the cytoplasm. Functionally, RNA-binding component of the eukaryotic translation initiation factor 3 (eIF-3) complex, which is involved in protein synthesis of a specialized repertoire of mRNAs and, together with other initiation factors, stimulates binding of mRNA and methionyl-tRNAi to the 40S ribosome. The eIF-3 complex specifically targets and initiates translation of a subset of mRNAs involved in cell proliferation. The polypeptide is Eukaryotic translation initiation factor 3 subunit B (TIF3B1) (Nicotiana tabacum (Common tobacco)).